The chain runs to 471 residues: Alpha-galactosidase 1 (471 aa).

The first 18 residues, 1 to 18, serve as a signal peptide directing secretion; that stretch reads MFAFYFLTACISLKGVFG. A disulfide bridge links Cys42 with Cys74. Substrate contacts are provided by Asp72 and Asp73. N-linked (GlcNAc...) asparagine glycosylation occurs at Asn105. A disulfide bond links Cys121 and Cys151. Residue Lys147 coordinates substrate. The active-site Nucleophile is the Asp149. N-linked (GlcNAc...) asparagine glycosylation is present at Asn175. Arg205 provides a ligand contact to substrate. The Proton donor role is filled by Asp209. 2 disulfides stabilise this stretch: Cys221–Cys237 and Cys223–Cys230. Gln251 contributes to the substrate binding site. Residues Asn270, Asn370, Asn403, Asn413, Asn422, Asn435, and Asn454 are each glycosylated (N-linked (GlcNAc...) asparagine).

This sequence belongs to the glycosyl hydrolase 27 family. As to quaternary structure, homotetramer.

It localises to the secreted. The enzyme catalyses Hydrolysis of terminal, non-reducing alpha-D-galactose residues in alpha-D-galactosides, including galactose oligosaccharides, galactomannans and galactolipids.. The chain is Alpha-galactosidase 1 (MEL1) from Saccharomyces cerevisiae (Baker's yeast).